We begin with the raw amino-acid sequence, 87 residues long: Tektin-2 (87 aa).

A coiled-coil region spans residues 26–55 (VEEELLKEVEVIEATKKALQQRVSQAFQQL).

The protein belongs to the tektin family. In terms of assembly, microtubule inner protein component of sperm flagellar doublet microtubules. May interact with CCDC172. Tyrosine phosphorylated. In terms of processing, ubiquitinated, leading to its degradation. Deubiquitinated by USP16, promoting its stability. As to expression, detected in sperm flagella (at protein level).

It is found in the cytoplasm. The protein localises to the cytoskeleton. The protein resides in the cilium axoneme. It localises to the flagellum axoneme. Its subcellular location is the microtubule organizing center. Its function is as follows. Microtubule inner protein (MIP) part of the dynein-decorated doublet microtubules (DMTs) in cilia and flagellar axoneme. Plays a key role in the assembly or attachment of the inner dynein arm to microtubules in sperm flagella and tracheal cilia. Forms filamentous polymers in the walls of ciliary and flagellar microtubules. In Mesocricetus auratus (Golden hamster), this protein is Tektin-2.